The sequence spans 259 residues: Ribosomal RNA small subunit methyltransferase A (259 aa).

Positions 13, 15, 40, 61, 85, and 103 each coordinate S-adenosyl-L-methionine.

Belongs to the class I-like SAM-binding methyltransferase superfamily. rRNA adenine N(6)-methyltransferase family. RsmA subfamily.

Its subcellular location is the cytoplasm. It carries out the reaction adenosine(1518)/adenosine(1519) in 16S rRNA + 4 S-adenosyl-L-methionine = N(6)-dimethyladenosine(1518)/N(6)-dimethyladenosine(1519) in 16S rRNA + 4 S-adenosyl-L-homocysteine + 4 H(+). In terms of biological role, specifically dimethylates two adjacent adenosines (A1518 and A1519) in the loop of a conserved hairpin near the 3'-end of 16S rRNA in the 30S particle. May play a critical role in biogenesis of 30S subunits. This Neisseria meningitidis serogroup C / serotype 2a (strain ATCC 700532 / DSM 15464 / FAM18) protein is Ribosomal RNA small subunit methyltransferase A.